We begin with the raw amino-acid sequence, 226 residues long: Endonuclease NucS (226 aa).

The protein belongs to the NucS endonuclease family.

It localises to the cytoplasm. Cleaves both 3' and 5' ssDNA extremities of branched DNA structures. The chain is Endonuclease NucS from Mycobacterium ulcerans (strain Agy99).